The primary structure comprises 252 residues: Carbohydrate deacetylase (252 aa).

Mg(2+)-binding residues include His-59 and His-122.

The protein belongs to the YdjC deacetylase family. As to quaternary structure, homodimer. Requires Mg(2+) as cofactor.

Its function is as follows. Probably catalyzes the deacetylation of acetylated carbohydrates an important step in the degradation of oligosaccharides. The sequence is that of Carbohydrate deacetylase from Vibrio vulnificus (strain CMCP6).